The chain runs to 486 residues: Glutamyl-tRNA(Gln) amidotransferase subunit A (486 aa).

Active-site charge relay system residues include lysine 74 and serine 149. Catalysis depends on serine 173, which acts as the Acyl-ester intermediate.

This sequence belongs to the amidase family. GatA subfamily. Heterotrimer of A, B and C subunits.

It catalyses the reaction L-glutamyl-tRNA(Gln) + L-glutamine + ATP + H2O = L-glutaminyl-tRNA(Gln) + L-glutamate + ADP + phosphate + H(+). In terms of biological role, allows the formation of correctly charged Gln-tRNA(Gln) through the transamidation of misacylated Glu-tRNA(Gln) in organisms which lack glutaminyl-tRNA synthetase. The reaction takes place in the presence of glutamine and ATP through an activated gamma-phospho-Glu-tRNA(Gln). This Prochlorococcus marinus (strain NATL2A) protein is Glutamyl-tRNA(Gln) amidotransferase subunit A.